The primary structure comprises 515 residues: Pre-glycoprotein polyprotein GP complex (515 aa).

Glycine 2 is lipidated: N-myristoyl glycine; by host. Residues 2–17 lie on the Extracellular side of the membrane; it reads GQVIGFFQSLPEIINE. A helical transmembrane segment spans residues 18–33; it reads ALNIALICVALLATIK. Over 34-58 the chain is Cytoplasmic; it reads GMVNIWKSGLIQLLFFLTLAGRSCS. Cysteine 57 contacts Zn(2+). The Extracellular segment spans residues 59–453; the sequence is HSFTIGRFHE…QGRTPLSLVD (395 aa). 4 disulfide bridges follow: cysteine 87–cysteine 255, cysteine 300–cysteine 313, cysteine 322–cysteine 331, and cysteine 385–cysteine 406. Asparagine 90, asparagine 112, asparagine 127, asparagine 180, and asparagine 248 each carry an N-linked (GlcNAc...) asparagine; by host glycan. 3 N-linked (GlcNAc...) asparagine; by host glycosylation sites follow: asparagine 386, asparagine 394, and asparagine 416. The helical transmembrane segment at 454-474 threads the bilayer; the sequence is LCFWSTLFYISTLFAHLVGFP. Residues 475–515 are Cytoplasmic-facing; the sequence is THRHLIGEGCPKPHRLTGSGICSCGHYGIPGKPVRWTKMSR. 6 residues coordinate Zn(2+): histidine 476, histidine 478, cysteine 484, histidine 488, cysteine 496, and cysteine 498.

The protein belongs to the arenaviridae GPC protein family. Interacts with glycoprotein G2. Part of the GP complex (GP-C) together with glycoprotein G1 and glycoprotein G2. The GP-complex interacts with protein Z, which interacts with ribonucleocapsid; these interactions may induce virion budding. As to quaternary structure, homotrimer; disulfide-linked. In pre-fusion state, G1 homotrimers bind G2 homotrimers via ionic interactions. Part of the GP complex (GP-C) together with glycoprotein G2 and the stable signal peptide. The GP-complex interacts with protein Z, which interacts with ribonucleocapsid; these interactions may induce virion budding. In terms of assembly, homotrimer. Interacts with the stable signal peptide. In pre-fusion state, G2 homotrimers bind G1 homotrimers via ionic interactions. Part of the GP complex (GP-C) together with glycoprotein G1 and the stable signal peptide. Acidification in the endosome triggers rearrangements, which ultimately leads to a 6 helix bundle formed by the two heptad repeat domains (HR1 and HR2) in post-fusion state. The GP-complex interacts with protein Z, which interacts with ribonucleocapsid; these interactions may induce virion budding. Specific enzymatic cleavages in vivo yield mature proteins. GP-C polyprotein is cleaved in the endoplasmic reticulum by the host protease MBTPS1. Only cleaved glycoprotein is incorporated into virions. In terms of processing, the SSP remains stably associated with the GP complex following cleavage by signal peptidase and plays crucial roles in the trafficking of GP through the secretory pathway. Post-translationally, myristoylation is necessary for GP2-mediated fusion activity.

The protein localises to the virion membrane. Its subcellular location is the host endoplasmic reticulum membrane. It is found in the host Golgi apparatus membrane. It localises to the host cell membrane. Functions as a cleaved signal peptide that is retained as the third component of the GP complex (GP-C). Helps to stabilize the spike complex in its native conformation. The SSP is required for efficient glycoprotein expression, post-translational maturation cleavage of G1 and G2, glycoprotein transport to the cell surface plasma membrane, formation of infectious virus particles, and acid pH-dependent glycoprotein-mediated cell fusion. Functionally, forms the virion spikes together with glycoprotein G2. The glycoprotein spike trimers are connected to the underlying matrix. Mediates virus attachment to host receptor alpha-dystroglycan DAG1. This attachment induces virion internalization predominantly through clathrin- and caveolin-independent endocytosis. Its function is as follows. Forms the virion spikes together with glycoprotein G1. The glycoprotein spike trimers are connected to the underlying matrix. Class I viral fusion protein that directs fusion of viral and host endosomal membranes, leading to delivery of the nucleocapsid into the cytoplasm. Membrane fusion is mediated by irreversible conformational changes induced by acidification. The polypeptide is Pre-glycoprotein polyprotein GP complex (Latino mammarenavirus (isolate Rat/Bolivia/MARU 1924/1965) (LATV)).